A 309-amino-acid polypeptide reads, in one-letter code: MTRTASAPRSVGSARPLKAIYDVPAPAKLNLFLHITGRRADGYHLLQSAFMLIDWCDTLHFELRTDGQISRADLSDPGSPGCGAAEPLPAEDLAVRAARALQAACGTSLGVHIGLEKRIPSQAGMGGGSSDAASCLLALQRLWGVTLPATELRALALSLGADVPFFLSGGHAWVEGIGEKITPIALPAARFVVVKPSAGLSTPAIFSAPELKRDTETATIQGFAANAEGQVFGFGRNDLQPVAQALCPPIGQSLDWLSAQHLQGRMTGSGSAVFALLPHDVDLSDVPGTPGDWKIRKCSNLQAHPLAGW.

Residue lysine 28 is part of the active site. 120–130 (PSQAGMGGGSS) provides a ligand contact to ATP. Residue aspartate 162 is part of the active site.

It belongs to the GHMP kinase family. IspE subfamily.

It carries out the reaction 4-CDP-2-C-methyl-D-erythritol + ATP = 4-CDP-2-C-methyl-D-erythritol 2-phosphate + ADP + H(+). It functions in the pathway isoprenoid biosynthesis; isopentenyl diphosphate biosynthesis via DXP pathway; isopentenyl diphosphate from 1-deoxy-D-xylulose 5-phosphate: step 3/6. Its function is as follows. Catalyzes the phosphorylation of the position 2 hydroxy group of 4-diphosphocytidyl-2C-methyl-D-erythritol. The protein is 4-diphosphocytidyl-2-C-methyl-D-erythritol kinase of Polaromonas sp. (strain JS666 / ATCC BAA-500).